Reading from the N-terminus, the 209-residue chain is Large ribosomal subunit protein uL3 (209 aa).

The protein belongs to the universal ribosomal protein uL3 family. As to quaternary structure, part of the 50S ribosomal subunit. Forms a cluster with proteins L14 and L19.

Functionally, one of the primary rRNA binding proteins, it binds directly near the 3'-end of the 23S rRNA, where it nucleates assembly of the 50S subunit. The protein is Large ribosomal subunit protein uL3 of Lactiplantibacillus plantarum (strain ATCC BAA-793 / NCIMB 8826 / WCFS1) (Lactobacillus plantarum).